The sequence spans 123 residues: Large ribosomal subunit protein bL17 (123 aa).

This sequence belongs to the bacterial ribosomal protein bL17 family. Part of the 50S ribosomal subunit. Contacts protein L32.

The sequence is that of Large ribosomal subunit protein bL17 from Borrelia garinii subsp. bavariensis (strain ATCC BAA-2496 / DSM 23469 / PBi) (Borreliella bavariensis).